The chain runs to 229 residues: Flagellar brake protein YcgR (229 aa).

The 85-residue stretch at 134–218 (QLSLRVLDVS…GERALQRYID (85 aa)) folds into the PilZ domain.

This sequence belongs to the YcgR family. In terms of assembly, monomer. Interacts with the flagellar basal bodies.

It localises to the bacterial flagellum basal body. Functionally, acts as a flagellar brake, regulating swimming and swarming in a bis-(3'-5') cyclic diguanylic acid (c-di-GMP)-dependent manner. Binds 1 c-di-GMP dimer per subunit. Increasing levels of c-di-GMP lead to decreased motility. This Methylibium petroleiphilum (strain ATCC BAA-1232 / LMG 22953 / PM1) protein is Flagellar brake protein YcgR.